The primary structure comprises 426 residues: Adenylosuccinate synthetase (426 aa).

Residues 12 to 18 (GDEGKGK) and 40 to 42 (GHT) contribute to the GTP site. The active-site Proton acceptor is Asp-13. Mg(2+)-binding residues include Asp-13 and Gly-40. IMP contacts are provided by residues 13–16 (DEGK), 38–41 (NAGH), Thr-128, Arg-142, Gln-223, Thr-238, and Arg-302. Catalysis depends on His-41, which acts as the Proton donor. 298 to 304 (TTTGRAR) contacts substrate. Residues Arg-304, 330–332 (KLD), and 412–414 (SVG) contribute to the GTP site.

This sequence belongs to the adenylosuccinate synthetase family. Homodimer. It depends on Mg(2+) as a cofactor.

The protein localises to the cytoplasm. The enzyme catalyses IMP + L-aspartate + GTP = N(6)-(1,2-dicarboxyethyl)-AMP + GDP + phosphate + 2 H(+). The protein operates within purine metabolism; AMP biosynthesis via de novo pathway; AMP from IMP: step 1/2. Plays an important role in the de novo pathway of purine nucleotide biosynthesis. Catalyzes the first committed step in the biosynthesis of AMP from IMP. The sequence is that of Adenylosuccinate synthetase from Thermoanaerobacter pseudethanolicus (strain ATCC 33223 / 39E) (Clostridium thermohydrosulfuricum).